Reading from the N-terminus, the 1572-residue chain is Dynein axonemal assembly factor 8 (1572 aa).

4 disordered regions span residues 1–21 (MASEQDGFLPAATRGDSNWSG), 262–304 (SEEV…HPQS), 324–428 (SLEQ…EILQ), and 849–871 (FQNPYSRSTQPRSANLRSRSDSE). Polar residues predominate over residues 324–335 (SLEQNPENPSQR). The segment covering 336-351 (NEQKEKHHLNKTDHTG) has biased composition (basic and acidic residues). Residues 361 to 374 (NIQNDSLSDANMSN) show a composition bias toward polar residues. Residues 409–426 (VGREEKDGREEQEKEKEI) show a composition bias toward basic and acidic residues. The span at 849–865 (FQNPYSRSTQPRSANLR) shows a compositional bias: polar residues. The tract at residues 1249-1382 (TVLLLKPRIW…IRDIKTFFPE (134 aa)) is NDK.

Interacts with DNAI2. As to expression, expression is enriched in multiciliated cells in the epidermis and the nephrostomes of the pronephros.

The protein localises to the dynein axonemal particle. Its subcellular location is the cytoplasm. In terms of biological role, in cyliated cells, dynein axonemal particle-specific protein required for deployment of ODA to the axoneme. Interacts with outer dynein arm (ODA) subunits. The chain is Dynein axonemal assembly factor 8 (dnaaf8) from Xenopus laevis (African clawed frog).